We begin with the raw amino-acid sequence, 474 residues long: GTPase Der (474 aa).

2 consecutive EngA-type G domains span residues 2–166 (LRIA…NVPE) and 212–385 (LKIA…TTVS). Residues 8-15 (GRPNVGKS), 55-59 (DTGGV), 118-121 (NKAD), 218-225 (GRPNVGKS), 265-269 (DTAGL), and 330-333 (NKWD) each bind GTP. A KH-like domain is found at 386 to 470 (SKVPTPVVNK…PFDLEFKEKT (85 aa)).

Belongs to the TRAFAC class TrmE-Era-EngA-EngB-Septin-like GTPase superfamily. EngA (Der) GTPase family. As to quaternary structure, associates with the 50S ribosomal subunit.

Its function is as follows. GTPase that plays an essential role in the late steps of ribosome biogenesis. The sequence is that of GTPase Der from Chlamydia abortus (strain DSM 27085 / S26/3) (Chlamydophila abortus).